The chain runs to 404 residues: Probable tRNA sulfurtransferase (404 aa).

Residues 61–166 (EAVSERLKDV…SGYSYIMCDE (106 aa)) enclose the THUMP domain. ATP is bound by residues 184–185 (LL), 209–210 (HF), R266, G288, and Q297.

It belongs to the ThiI family.

It is found in the cytoplasm. The enzyme catalyses [ThiI sulfur-carrier protein]-S-sulfanyl-L-cysteine + a uridine in tRNA + 2 reduced [2Fe-2S]-[ferredoxin] + ATP + H(+) = [ThiI sulfur-carrier protein]-L-cysteine + a 4-thiouridine in tRNA + 2 oxidized [2Fe-2S]-[ferredoxin] + AMP + diphosphate. It carries out the reaction [ThiS sulfur-carrier protein]-C-terminal Gly-Gly-AMP + S-sulfanyl-L-cysteinyl-[cysteine desulfurase] + AH2 = [ThiS sulfur-carrier protein]-C-terminal-Gly-aminoethanethioate + L-cysteinyl-[cysteine desulfurase] + A + AMP + 2 H(+). The protein operates within cofactor biosynthesis; thiamine diphosphate biosynthesis. In terms of biological role, catalyzes the ATP-dependent transfer of a sulfur to tRNA to produce 4-thiouridine in position 8 of tRNAs, which functions as a near-UV photosensor. Also catalyzes the transfer of sulfur to the sulfur carrier protein ThiS, forming ThiS-thiocarboxylate. This is a step in the synthesis of thiazole, in the thiamine biosynthesis pathway. The sulfur is donated as persulfide by IscS. The sequence is that of Probable tRNA sulfurtransferase from Bacillus cereus (strain B4264).